The chain runs to 759 residues: Rho GTPase-activating protein 26 (759 aa).

One can recognise a BAR domain in the interval 7–262 (EFSDCYLDSP…MKENPHEHLA (256 aa)). The PH domain occupies 265–369 (PYTMEGYLYV…WMEAMDGREP (105 aa)). One can recognise a Rho-GAP domain in the interval 383 to 568 (AQLDNIGFSI…IIIENYEKMF (186 aa)). The tract at residues 578–701 (NSQLHLSRKR…STSSDSSPVS (124 aa)) is disordered. Basic and acidic residues predominate over residues 608–617 (HNTEKEEKRN). A compositionally biased stretch (low complexity) spans 618–637 (SVNSSAESVSSSNANSSANS). A compositionally biased stretch (polar residues) spans 638-650 (TCTQCSNMNNLNA). Low complexity predominate over residues 679–701 (PMFSAPSSPMPTSSTSSDSSPVS). The 59-residue stretch at 701–759 (SVPRKAKALYACKAEHDSELSFSAGTVFDNVYPSQEPGWLEGILNGKTGLIPENYVEFL) folds into the SH3 domain.

Its subcellular location is the cell junction. The protein localises to the focal adhesion. It is found in the cytoplasm. The protein resides in the cytoskeleton. It localises to the endosome membrane. Functionally, GTPase-activating protein for rhoa and cdc42. This Xenopus tropicalis (Western clawed frog) protein is Rho GTPase-activating protein 26 (arhgap26).